The chain runs to 795 residues: ATP-dependent RNA helicase DHX15 (795 aa).

A disordered region spans residues 1–108 (MSKRHRLDLG…HSTHAGHAGH (108 aa)). Phosphoserine is present on Ser-15. The span at 20–62 (AGTDGKDRDRDRDREDRSKDRDRERDRGDREREREKEKEKELR) shows a compositional bias: basic and acidic residues. Residues 79–108 (ASHSAHSTHSAHSAHSTHSAHSTHAGHAGH) are compositionally biased toward low complexity. The Helicase ATP-binding domain maps to 147-313 (TDILVRHQSF…FDNCPLLTIP (167 aa)). An ATP-binding site is contributed by 160-167 (GETGSGKT). Positions 260–263 (DEAH) match the DEAH box motif. The Helicase C-terminal domain maps to 338–518 (TVIQIHMCEE…SVVLQLKKLG (181 aa)). Lys-488 is subject to N6-acetyllysine. Residue Lys-786 forms a Glycyl lysine isopeptide (Lys-Gly) (interchain with G-Cter in SUMO2) linkage.

The protein belongs to the DEAD box helicase family. DEAH subfamily. DDX15/PRP43 sub-subfamily. Component of the U11/U12 snRNPs that are part of the U12-type spliceosome. Identified in the Intron Large spliceosome complex (IL, also named intron lariat spliceosome), a post-mRNA release spliceosomal complex containing the excised intron, U2, U5 and U6 snRNPs, and splicing factors; the association may be transient. The IL complex exists in two distinct conformations, one with the DHX15 (ILS2) and one without (ILS1). Interacts with TFIP11 (via G-patch domain); indicative for a recruitment to the IL complex. Interacts with SSB/La. Interacts with GPATCH2 (via G-patch domain); promoting the RNA helicase activity. Interacts with NKRF (via G-patch domain); promoting the RNA helicase activity. Interacts with NLRP6.

The protein localises to the nucleus. Its subcellular location is the nucleolus. It catalyses the reaction ATP + H2O = ADP + phosphate + H(+). Its activity is regulated as follows. ATPase activity is enhanced upon binding to G-patch domain-containing proteins. G-patch domain-containing proteins act like a brace that tethers mobile sections of DHX15 together, stabilizing a functional conformation with high RNA affinity, thereby promoting the ATPase activity. Functionally, RNA helicase involved in mRNA processing and antiviral innate immunity. Pre-mRNA processing factor involved in disassembly of spliceosomes after the release of mature mRNA. In cooperation with TFIP11 seem to be involved in the transition of the U2, U5 and U6 snRNP-containing IL complex to the snRNP-free IS complex leading to efficient debranching and turnover of excised introns. Plays a key role in antiviral innate immunity by promoting both MAVS-dependent signaling and NLRP6 inflammasome. Acts as an RNA virus sensor: recognizes and binds viral double stranded RNA (dsRNA) and activates the MAVS-dependent signaling to produce interferon-beta and interferon lambda-3 (IFNL3). Involved in intestinal antiviral innate immunity together with NLRP6: recognizes and binds viral dsRNA and promotes activation of the NLRP6 inflammasome in intestinal epithelial cells to restrict infection by enteric viruses. The NLRP6 inflammasome acts by promoting maturation and secretion of IL18 in the extracellular milieu. Also involved in antibacterial innate immunity by promoting Wnt-induced antimicrobial protein expression in Paneth cells. The sequence is that of ATP-dependent RNA helicase DHX15 from Pongo abelii (Sumatran orangutan).